Here is a 477-residue protein sequence, read N- to C-terminus: Glycogen synthase (477 aa).

Lysine 15 serves as a coordination point for ADP-alpha-D-glucose.

This sequence belongs to the glycosyltransferase 1 family. Bacterial/plant glycogen synthase subfamily.

It catalyses the reaction [(1-&gt;4)-alpha-D-glucosyl](n) + ADP-alpha-D-glucose = [(1-&gt;4)-alpha-D-glucosyl](n+1) + ADP + H(+). It functions in the pathway glycan biosynthesis; glycogen biosynthesis. Its function is as follows. Synthesizes alpha-1,4-glucan chains using ADP-glucose. In Salmonella typhi, this protein is Glycogen synthase.